Consider the following 244-residue polypeptide: NAD(P)H-quinone oxidoreductase subunit K (244 aa).

[4Fe-4S] cluster-binding residues include Cys-60, Cys-61, Cys-125, and Cys-156. The span at 221–236 shows a compositional bias: basic and acidic residues; the sequence is SKKEKITELPENREQT. Residues 221–244 are disordered; the sequence is SKKEKITELPENREQTEIINSEEE.

It belongs to the complex I 20 kDa subunit family. As to quaternary structure, NDH-1 can be composed of about 15 different subunits; different subcomplexes with different compositions have been identified which probably have different functions. Requires [4Fe-4S] cluster as cofactor.

Its subcellular location is the cellular thylakoid membrane. The enzyme catalyses a plastoquinone + NADH + (n+1) H(+)(in) = a plastoquinol + NAD(+) + n H(+)(out). The catalysed reaction is a plastoquinone + NADPH + (n+1) H(+)(in) = a plastoquinol + NADP(+) + n H(+)(out). Its function is as follows. NDH-1 shuttles electrons from an unknown electron donor, via FMN and iron-sulfur (Fe-S) centers, to quinones in the respiratory and/or the photosynthetic chain. The immediate electron acceptor for the enzyme in this species is believed to be plastoquinone. Couples the redox reaction to proton translocation, and thus conserves the redox energy in a proton gradient. Cyanobacterial NDH-1 also plays a role in inorganic carbon-concentration. The protein is NAD(P)H-quinone oxidoreductase subunit K of Prochlorococcus marinus (strain MIT 9312).